The primary structure comprises 442 residues: Chromosomal replication initiator protein DnaA (442 aa).

The interval Met1–Arg69 is domain I, interacts with DnaA modulators. Residues Arg69–Ala103 form a domain II region. A domain III, AAA+ region region spans residues Ser104–Val320. Positions 148, 150, 151, and 152 each coordinate ATP. Residues Ser321–His442 form a domain IV, binds dsDNA region.

This sequence belongs to the DnaA family. Oligomerizes as a right-handed, spiral filament on DNA at oriC.

The protein localises to the cytoplasm. Plays an essential role in the initiation and regulation of chromosomal replication. ATP-DnaA binds to the origin of replication (oriC) to initiate formation of the DNA replication initiation complex once per cell cycle. Binds the DnaA box (a 9 base pair repeat at the origin) and separates the double-stranded (ds)DNA. Forms a right-handed helical filament on oriC DNA; dsDNA binds to the exterior of the filament while single-stranded (ss)DNA is stabiized in the filament's interior. The ATP-DnaA-oriC complex binds and stabilizes one strand of the AT-rich DNA unwinding element (DUE), permitting loading of DNA polymerase. After initiation quickly degrades to an ADP-DnaA complex that is not apt for DNA replication. Binds acidic phospholipids. The polypeptide is Chromosomal replication initiator protein DnaA (Gloeobacter violaceus (strain ATCC 29082 / PCC 7421)).